The chain runs to 301 residues: Probable alpha-L-glutamate ligase 1 (301 aa).

The ATP-grasp domain occupies leucine 104–glutamate 287. ATP contacts are provided by residues lysine 141, glutamate 178–tyrosine 179, aspartate 187, and arginine 211–asparagine 213. The Mg(2+) site is built by aspartate 248, glutamate 260, and asparagine 262. Mn(2+)-binding residues include aspartate 248, glutamate 260, and asparagine 262.

Belongs to the RimK family. Mg(2+) serves as cofactor. Requires Mn(2+) as cofactor.

The polypeptide is Probable alpha-L-glutamate ligase 1 (Shewanella baltica (strain OS155 / ATCC BAA-1091)).